The sequence spans 1081 residues: uncharacterized protein (1081 aa).

Coiled-coil stretches lie at residues 18–131 (AIEE…FEEN) and 173–242 (NHDE…NDDK). Positions 22–53 (NNKNREIQEKRQKETKDRNDRMVQNQKDRKEM) are enriched in basic and acidic residues. The disordered stretch occupies residues 22–60 (NNKNREIQEKRQKETKDRNDRMVQNQKDRKEMIGLTNEK). Disordered regions lie at residues 250 to 321 (TDDE…KPGI) and 388 to 1081 (QEPK…GNDE). Pro residues predominate over residues 267–283 (TPTPTPTPTPTPTPTPT). Low complexity-rich tracts occupy residues 284–313 (PTTTTTTTTTPKPTTTTTTTSTTTPTKTST) and 396–410 (NNQSNNNNNNNQAGD). Residues 411-421 (DQNKNQNRDEN) are compositionally biased toward basic and acidic residues. Composition is skewed to low complexity over residues 422–568 (NQGG…NNQE), 576–602 (NQDGGENNQDGGENNQDGENNQDGGEN), 614–623 (GENNQDGGEN), 633–644 (DGENNQDGGENN), 662–672 (GENNQDGGENN), and 680–733 (QDGG…NNQD). Composition is skewed to acidic residues over residues 748–768 (GGEDNQDGGEDNQDGGEDNQD), 778–832 (NNQD…DENN), and 840–854 (QDGDENNNQDGDENN). 2 stretches are compositionally biased toward low complexity: residues 855-869 (NQDGGENNQDGGENN) and 877-888 (NQDGGENNQDGE). A compositionally biased stretch (acidic residues) spans 889 to 954 (NNQDGDENNN…GDENNQDGDE (66 aa)). Composition is skewed to low complexity over residues 955–975 (NNQGNDENNQDGDQNNQGGDE), 983–1026 (ENNQ…GGDE), and 1034–1081 (GENN…GNDE).

This is an uncharacterized protein from Dictyostelium discoideum (Social amoeba).